The following is a 1420-amino-acid chain: MDAYREFIDPSKVNNCVGCNFISSTKKNLIVGKGSLLQIFETIQLKQSTINKPQYRLKLIDQFKLQGTITDLKSIRTIENPNLDYLMVSTKYAKFSIIKWDHHLNTIATVSLHYYEHCIQNSTFEKLAVSELILEPTYNSVSCLRFKNLLCFLPFEVIEDDEDEEEEEEEDEEDEDEGEENIDDTKEKKDKKQSKTDTIEEDKNSTTTNQEPRLFYDSSFIIDATTLDSSIDTVVDMQFLHNYREPTIAVLSSKQEVWAGNLIKSKDNIQFQVLTLDLNLKSTISVFKIDNLPYEIDRIIPLPSPLNGTLLVGCNELIHVDNGGVLKRIAVNKFTRLITASFKSFQDQSDLNLKLENCSVVPIPDDHRVLLILQTGEFYFINFELDGKSIKRIHIDNVDKKTYDKIQLNHPGEVAILDKNMLFIANSNGNSPLIQVRYRDSSKTSDTKESKLNKIEEKEDNKDDDDNDDDDEDDLYKEEEEEETQKTISKSHIEFLYHDELINNGPSSTFTLGICSKEKFKCNLPNPNYNEVSILSNAGTDSQTKLNIITPTIQPSISSSLTFSQVNRMWNLNQKYLITSDDVNYKSEIFQIEKSYARMKSKHFINNELTINMHELNNGKFILQVTPKQIVLYDNKFKKRFTLNDEIKDDEILSSILRDEFLMIFLASGDVMIFVINTYNESYDKIEIPKLLDDTIITTGYITNSYLLSAVSKNVNLLLDNNTSSNKRKRKHSALSNSEGSKKNTGKSQPSTAAPPPPPKVNKVKTFVLVTGDNRIVAFNRFHGEKCYQLNHVDKFTENLSLGFFDPNQSTVDPFIKQIMLNELGDKFDTKDEYLTILTIGGEIYMYKLYFDGENYFFKKEKDLTITGAPDNAFPYGTSIERRLVYFPNLNGFTSIFVTGVIPYLILKTVHSIPRIFQFSKIAAMSISAFSDSKIKNGLIFLDNQQNARICELPLDFNYEFNLPMKHVDIGESIKSIAYHETSDTVVLSTFKQIPYDCLDEEGKPIAGIIKDIKDTPAMSFKGSIKLVSPYNWTVIETIELEDNEVGMTLKSMILDVGSESGSTLGSDPNSLIKKYNKKKREYIVIGIGKYRMEDLAANGIFKIYEIIDIIPEPGKPETNHKFKEIFKEETRGAITSICELSGRFLVSQGQKVIVRDLQDDGTVPVAFLDTPVYVSESKSFGNLLILGDPLKGCWLVGFDAEPFRMIMLGKDTQHISVECADFIINDDEIFVLVADNNNVLHLLNYDPDDPQSINGTKLLTKASFELNSTISCLRSLPLIDIEESVQTDALTNIAVPPPLPPNTTSNYFQVIGSTQDGSFFNVFPINEAAYRRMYILQQQLIDKEFHYCGLNPRLNRIGSIKLQNNETNTKPILDYDLIRRFTKLSDDRKRNLANKVSGKGIYQDIWKDIIRFEHTLNDL.

Acidic residues predominate over residues 161–182 (DEDEEEEEEEDEEDEDEGEENI). Disordered regions lie at residues 161 to 210 (DEDE…TTNQ), 435 to 488 (QVRY…QKTI), and 722 to 760 (NTSS…PPPK). Composition is skewed to basic and acidic residues over residues 183 to 204 (DDTK…EDKN) and 437 to 461 (RYRD…KEDN). Acidic residues predominate over residues 462-483 (KDDDDNDDDDEDDLYKEEEEEE).

The protein belongs to the CFT1 family.

It is found in the nucleus. RNA-binding component of the cleavage and polyadenylation factor (CPF) complex, which plays a key role in polyadenylation-dependent pre-mRNA 3'-end formation and cooperates with cleavage factors including the CFIA complex and NAB4/CFIB. Involved in poly(A) site recognition. May be involved in coupling transcription termination and mRNA 3'-end formation. The polypeptide is Protein CFT1 (CFT1) (Candida albicans (strain SC5314 / ATCC MYA-2876) (Yeast)).